Consider the following 450-residue polypeptide: Bifunctional protein GlmU (450 aa).

The tract at residues 1–229 (MRRHAIILAA…VEEIMGVNDR (229 aa)) is pyrophosphorylase. UDP-N-acetyl-alpha-D-glucosamine-binding positions include 8–11 (LAAG), lysine 22, glutamine 72, and 77–78 (GT). Residue aspartate 102 participates in Mg(2+) binding. Residues glycine 139, glutamate 154, and asparagine 227 each coordinate UDP-N-acetyl-alpha-D-glucosamine. Asparagine 227 is a Mg(2+) binding site. Positions 230 to 250 (VMLSQAEKAMQRRTNHYHMLN) are linker. The N-acetyltransferase stretch occupies residues 251 to 450 (GVTIIDPDST…RQTTKEGYRK (200 aa)). Arginine 332 and lysine 350 together coordinate UDP-N-acetyl-alpha-D-glucosamine. The active-site Proton acceptor is histidine 362. Residues tyrosine 365 and asparagine 376 each contribute to the UDP-N-acetyl-alpha-D-glucosamine site. Residues 385-386 (NY), alanine 422, and arginine 439 each bind acetyl-CoA.

In the N-terminal section; belongs to the N-acetylglucosamine-1-phosphate uridyltransferase family. This sequence in the C-terminal section; belongs to the transferase hexapeptide repeat family. As to quaternary structure, homotrimer. It depends on Mg(2+) as a cofactor.

It is found in the cytoplasm. It carries out the reaction alpha-D-glucosamine 1-phosphate + acetyl-CoA = N-acetyl-alpha-D-glucosamine 1-phosphate + CoA + H(+). The catalysed reaction is N-acetyl-alpha-D-glucosamine 1-phosphate + UTP + H(+) = UDP-N-acetyl-alpha-D-glucosamine + diphosphate. It functions in the pathway nucleotide-sugar biosynthesis; UDP-N-acetyl-alpha-D-glucosamine biosynthesis; N-acetyl-alpha-D-glucosamine 1-phosphate from alpha-D-glucosamine 6-phosphate (route II): step 2/2. The protein operates within nucleotide-sugar biosynthesis; UDP-N-acetyl-alpha-D-glucosamine biosynthesis; UDP-N-acetyl-alpha-D-glucosamine from N-acetyl-alpha-D-glucosamine 1-phosphate: step 1/1. It participates in bacterial outer membrane biogenesis; LPS lipid A biosynthesis. Its function is as follows. Catalyzes the last two sequential reactions in the de novo biosynthetic pathway for UDP-N-acetylglucosamine (UDP-GlcNAc). The C-terminal domain catalyzes the transfer of acetyl group from acetyl coenzyme A to glucosamine-1-phosphate (GlcN-1-P) to produce N-acetylglucosamine-1-phosphate (GlcNAc-1-P), which is converted into UDP-GlcNAc by the transfer of uridine 5-monophosphate (from uridine 5-triphosphate), a reaction catalyzed by the N-terminal domain. In Staphylococcus aureus (strain USA300), this protein is Bifunctional protein GlmU.